Reading from the N-terminus, the 299-residue chain is ATP phosphoribosyltransferase (299 aa).

It belongs to the ATP phosphoribosyltransferase family. Long subfamily. In terms of assembly, equilibrium between an active dimeric form, an inactive hexameric form and higher aggregates. Interconversion between the various forms is largely reversible and is influenced by the natural substrates and inhibitors of the enzyme. It depends on Mg(2+) as a cofactor.

The protein localises to the cytoplasm. It carries out the reaction 1-(5-phospho-beta-D-ribosyl)-ATP + diphosphate = 5-phospho-alpha-D-ribose 1-diphosphate + ATP. The protein operates within amino-acid biosynthesis; L-histidine biosynthesis; L-histidine from 5-phospho-alpha-D-ribose 1-diphosphate: step 1/9. Its activity is regulated as follows. Feedback inhibited by histidine. Catalyzes the condensation of ATP and 5-phosphoribose 1-diphosphate to form N'-(5'-phosphoribosyl)-ATP (PR-ATP). Has a crucial role in the pathway because the rate of histidine biosynthesis seems to be controlled primarily by regulation of HisG enzymatic activity. This is ATP phosphoribosyltransferase from Salmonella choleraesuis (strain SC-B67).